The following is a 592-amino-acid chain: Membrane protein insertase YidC (592 aa).

The helical transmembrane segment at 7 to 27 (NYFVAIALSVLILVAWQYFYV) threads the bilayer. Residues 38–74 (AEKAQQTQQVQPQQGGQQPAPGQALPGGAVPGESRDQ) are disordered. Low complexity predominate over residues 41 to 69 (AQQTQQVQPQQGGQQPAPGQALPGGAVPG). The next 4 membrane-spanning stretches (helical) occupy residues 367-387 (LFGNFGVAILVTTIVVKLIFF), 441-461 (WPILIQIPVFFALYKVIYITI), 486-506 (LFGLLPFDGPAFLHLGIWPII), and 530-550 (FTWMPLVFTFMLASFPAGLVI).

The protein belongs to the OXA1/ALB3/YidC family. Type 1 subfamily. Interacts with the Sec translocase complex via SecD. Specifically interacts with transmembrane segments of nascent integral membrane proteins during membrane integration.

It localises to the cell inner membrane. Functionally, required for the insertion and/or proper folding and/or complex formation of integral membrane proteins into the membrane. Involved in integration of membrane proteins that insert both dependently and independently of the Sec translocase complex, as well as at least some lipoproteins. Aids folding of multispanning membrane proteins. In Sinorhizobium fredii (strain NBRC 101917 / NGR234), this protein is Membrane protein insertase YidC.